The following is a 115-amino-acid chain: U31-theraphotoxin-Cg1b (115 aa).

A signal peptide spans 1-18 (MKLCVIIIASLMVASVSG). Residues 19 to 51 (RLRKIKGTELDKKMLLEKLGHGMDIRFEETPRE) constitute a propeptide that is removed on maturation. Disulfide bonds link Cys52–Cys67, Cys60–Cys73, Cys64–Cys113, and Cys66–Cys86.

The protein belongs to the neurotoxin 03 (Tx2) family. 02 subfamily. In terms of tissue distribution, expressed by the venom gland.

Its subcellular location is the secreted. Probable ion channel inhibitor. This chain is U31-theraphotoxin-Cg1b, found in Chilobrachys guangxiensis (Chinese earth tiger tarantula).